The following is a 438-amino-acid chain: (S)-3,5-dihydroxyphenylglycine transaminase (438 aa).

Lys266 bears the N6-(pyridoxal phosphate)lysine mark.

This sequence belongs to the class-I pyridoxal-phosphate-dependent aminotransferase family. Pyridoxal 5'-phosphate serves as cofactor.

It catalyses the reaction (S)-3,5-dihydroxyphenylglycine + 2-oxoglutarate = 2-(3,5-dihydroxyphenyl)-2-oxoacetate + L-glutamate. The protein operates within antibiotic biosynthesis; vancomycin biosynthesis. Catalyzes the transamination of p-hydroxybenzoylformate to L-p-hydroxyphenylglycine as part of the biosynthesis of the (S)-3,5-dihydroxyphenylglycine constituent of the glycopeptide antibiotic chloroeremomycin, a member of the vancomycin group of antibiotics. This is (S)-3,5-dihydroxyphenylglycine transaminase (hpgT) from Amycolatopsis orientalis (Nocardia orientalis).